Reading from the N-terminus, the 65-residue chain is Large ribosomal subunit protein bL35 (65 aa).

The protein belongs to the bacterial ribosomal protein bL35 family.

In Thermotoga neapolitana (strain ATCC 49049 / DSM 4359 / NBRC 107923 / NS-E), this protein is Large ribosomal subunit protein bL35.